We begin with the raw amino-acid sequence, 137 residues long: Large ribosomal subunit protein uL16 (137 aa).

The protein belongs to the universal ribosomal protein uL16 family. In terms of assembly, part of the 50S ribosomal subunit.

In terms of biological role, binds 23S rRNA and is also seen to make contacts with the A and possibly P site tRNAs. The protein is Large ribosomal subunit protein uL16 of Bartonella quintana (strain Toulouse) (Rochalimaea quintana).